A 429-amino-acid chain; its full sequence is Dihydroorotase (429 aa).

Zn(2+) is bound by residues histidine 59 and histidine 61. Residues histidine 61–arginine 63 and asparagine 93 each bind substrate. The Zn(2+) site is built by lysine 143, histidine 171, histidine 229, and aspartate 298. Residue lysine 143 is modified to N6-carboxylysine. Residue aspartate 298 is part of the active site. Substrate is bound by residues histidine 302 and alanine 316–glycine 317.

It belongs to the metallo-dependent hydrolases superfamily. DHOase family. Class I DHOase subfamily. Requires Zn(2+) as cofactor.

It carries out the reaction (S)-dihydroorotate + H2O = N-carbamoyl-L-aspartate + H(+). It functions in the pathway pyrimidine metabolism; UMP biosynthesis via de novo pathway; (S)-dihydroorotate from bicarbonate: step 3/3. In terms of biological role, catalyzes the reversible cyclization of carbamoyl aspartate to dihydroorotate. The polypeptide is Dihydroorotase (Methanosphaera stadtmanae (strain ATCC 43021 / DSM 3091 / JCM 11832 / MCB-3)).